The sequence spans 150 residues: Arginine repressor (150 aa).

This sequence belongs to the ArgR family.

Its subcellular location is the cytoplasm. It functions in the pathway amino-acid biosynthesis; L-arginine biosynthesis [regulation]. In terms of biological role, regulates arginine biosynthesis genes. The polypeptide is Arginine repressor (Desulforudis audaxviator (strain MP104C)).